Here is a 78-residue protein sequence, read N- to C-terminus: Acyl carrier protein (78 aa).

Residues 1–76 form the Carrier domain; sequence MAIHPKVKDI…DVASYLEKKG (76 aa). Position 36 is an O-(pantetheine 4'-phosphoryl)serine (S36).

This sequence belongs to the acyl carrier protein (ACP) family. Post-translationally, 4'-phosphopantetheine is transferred from CoA to a specific serine of apo-ACP by AcpS. This modification is essential for activity because fatty acids are bound in thioester linkage to the sulfhydryl of the prosthetic group.

The protein resides in the cytoplasm. It functions in the pathway lipid metabolism; fatty acid biosynthesis. Its function is as follows. Carrier of the growing fatty acid chain in fatty acid biosynthesis. The protein is Acyl carrier protein of Bdellovibrio bacteriovorus (strain ATCC 15356 / DSM 50701 / NCIMB 9529 / HD100).